The chain runs to 73 residues: Mu-conotoxin PIIIA (73 aa).

A signal peptide spans Met1 to Ala19. A propeptide spanning residues Leu20–Arg49 is cleaved from the precursor. A Pyrrolidone carboxylic acid modification is found at Gln50. Cystine bridges form between Cys53–Cys65, Cys53–Cys70, Cys54–Cys70, Cys54–Cys71, Cys60–Cys65, and Cys60–Cys71. The residue at position 57 (Pro57) is a 4-hydroxyproline. The residue at position 67 (Pro67) is a 4-hydroxyproline. Cys71 is modified (cysteine amide).

It belongs to the conotoxin M superfamily. In terms of processing, 3D-structure of 3 disulfide-bond connectivities isomers is described (PIIIA-1 (C1-C5, C2-C6, C3-C4), PIIIA-2 (C1-C4, C2-C5, C3-C6) and PIIIA-3 (C1-C2, C3-C4, C5-C6)). Only PIIIA-2 contains the cysteine connectivity described as typical for native mu-conotoxins. However, PIIIA-1 is more potent than PIIIA-2, suggesting another possible disulfid connectivity. For this reason, both connectivities have been indicated in features. Expressed by the venom duct.

It is found in the secreted. In terms of biological role, mu-conotoxins block voltage-gated sodium channels (Nav). This toxin potently blocks rNav1.4/SCN4A (IC(50)=36-41 nM). It also moderately blocks rNav1.1/SCN1A (IC(50)=120 nM), rNav1.2/SCN2A (IC(50)=620 nM), rNav1.3/SCN3A (IC(50)=3.2 uM), mNav1.6/SCN8A (IC(50)=100 nM). This inhibition is reversible. The block of Nav1.1, Nav1.2, and Nav1.6 is modified when beta-subunits are coexpressed with alpha subunits. Hence, blocks of channels containing the beta-1 and beta-3 subunits are more potent (compared to channels without beta subunits), whereas blocks of channels containing the beta-2 and beta-4 are less potent (compared to channels without beta subunits). In vivo, this peptide causes flaccid paralysis in both mice and fish. The protein is Mu-conotoxin PIIIA of Conus purpurascens (Purple cone).